Consider the following 746-residue polypeptide: Long-chain-alcohol oxidase FAO3 (746 aa).

A helical membrane pass occupies residues Ile-139–Phe-159. Cys-233–Ala-248 provides a ligand contact to FAD. The active-site Proton acceptor is His-677.

It belongs to the GMC oxidoreductase family.

It is found in the membrane. It carries out the reaction a long-chain primary fatty alcohol + O2 = a long-chain fatty aldehyde + H2O2. In terms of biological role, long-chain fatty alcohol oxidase involved in the omega-oxidation pathway of lipid degradation. The sequence is that of Long-chain-alcohol oxidase FAO3 (FAO3) from Arabidopsis thaliana (Mouse-ear cress).